We begin with the raw amino-acid sequence, 155 residues long: Ribosome maturation factor RimP (155 aa).

This sequence belongs to the RimP family.

The protein localises to the cytoplasm. Its function is as follows. Required for maturation of 30S ribosomal subunits. The protein is Ribosome maturation factor RimP of Listeria innocua serovar 6a (strain ATCC BAA-680 / CLIP 11262).